Here is a 408-residue protein sequence, read N- to C-terminus: MFALPQAGDRRGEIIKVLLSNGWDYMNGLLTLGKVGEPQIPTPEVLTKILVELGPFYIKLGQLLSTRPDLLPPRYINALTALQSNVPPLPWSAIEDLLQREFPQPLGETFQEIESEPIAAGSIGQIHRAVLQSGETVAIKVKRPGIDVIVEQDSLLIKDVAELLALTEFGQNYDIVKLADEFTQTVKAELNFDTEAAYTNNLRTNLAKTTWFDPNQLVIPKVYWELTNQKFLVLEWLDGVPILTADLTQPPSDKDIAEKKKEITTLLFRAFFQQLYVDGFFHADPHPGNIFYLADGRLALIDCGMVGRLDPRTRQLLTEMLLAIVDLDAKRCAQLTVELSESVGRVNFQRLEVDYERMLRKYYDLSLSEFNFSEVVYEFLRIARVNKLKVPACLGLYAKCLANLEGAG.

The protein belongs to the protein kinase superfamily. ADCK protein kinase family.

This is an uncharacterized protein from Synechocystis sp. (strain ATCC 27184 / PCC 6803 / Kazusa).